A 216-amino-acid chain; its full sequence is Glycerol-3-phosphate acyltransferase (216 aa).

6 helical membrane-spanning segments follow: residues 3 to 23 (FPIF…YWIA), 48 to 68 (IGWK…MLPV), 82 to 102 (FQLL…FLGF), 112 to 132 (FGVF…VFWV), 142 to 162 (LGSI…TILL), and 166 to 186 (EVSY…ILTH).

It belongs to the PlsY family. In terms of assembly, probably interacts with PlsX.

It localises to the cell inner membrane. It carries out the reaction an acyl phosphate + sn-glycerol 3-phosphate = a 1-acyl-sn-glycero-3-phosphate + phosphate. Its pathway is lipid metabolism; phospholipid metabolism. Functionally, catalyzes the transfer of an acyl group from acyl-phosphate (acyl-PO(4)) to glycerol-3-phosphate (G3P) to form lysophosphatidic acid (LPA). This enzyme utilizes acyl-phosphate as fatty acyl donor, but not acyl-CoA or acyl-ACP. This chain is Glycerol-3-phosphate acyltransferase, found in Leptospira interrogans serogroup Icterohaemorrhagiae serovar Lai (strain 56601).